Here is a 297-residue protein sequence, read N- to C-terminus: Probable GTP 3',8-cyclase (297 aa).

The 217-residue stretch at 4-220 (EFGREIRSFR…VVTRKFMQNR (217 aa)) folds into the Radical SAM core domain. Residue Arg13 coordinates GTP. Positions 20 and 24 each coordinate [4Fe-4S] cluster. An S-adenosyl-L-methionine-binding site is contributed by Tyr26. Cys27 serves as a coordination point for [4Fe-4S] cluster. Position 61 (Lys61) interacts with GTP. Residue Gly65 participates in S-adenosyl-L-methionine binding. Position 91 (Thr91) interacts with GTP. Ser115 lines the S-adenosyl-L-methionine pocket. Lys151 is a binding site for GTP. Cys242 and Cys245 together coordinate [4Fe-4S] cluster. 247–249 (RIR) contacts GTP. A [4Fe-4S] cluster-binding site is contributed by Cys259.

This sequence belongs to the radical SAM superfamily. MoaA family. [4Fe-4S] cluster serves as cofactor.

The catalysed reaction is GTP + AH2 + S-adenosyl-L-methionine = (8S)-3',8-cyclo-7,8-dihydroguanosine 5'-triphosphate + 5'-deoxyadenosine + L-methionine + A + H(+). It functions in the pathway cofactor biosynthesis; molybdopterin biosynthesis. Catalyzes the cyclization of GTP to (8S)-3',8-cyclo-7,8-dihydroguanosine 5'-triphosphate. This Methanococcus vannielii (strain ATCC 35089 / DSM 1224 / JCM 13029 / OCM 148 / SB) protein is Probable GTP 3',8-cyclase.